We begin with the raw amino-acid sequence, 503 residues long: Aspartyl/glutamyl-tRNA(Asn/Gln) amidotransferase subunit B (503 aa).

It belongs to the GatB/GatE family. GatB subfamily. In terms of assembly, heterotrimer of A, B and C subunits.

It carries out the reaction L-glutamyl-tRNA(Gln) + L-glutamine + ATP + H2O = L-glutaminyl-tRNA(Gln) + L-glutamate + ADP + phosphate + H(+). It catalyses the reaction L-aspartyl-tRNA(Asn) + L-glutamine + ATP + H2O = L-asparaginyl-tRNA(Asn) + L-glutamate + ADP + phosphate + 2 H(+). Functionally, allows the formation of correctly charged Asn-tRNA(Asn) or Gln-tRNA(Gln) through the transamidation of misacylated Asp-tRNA(Asn) or Glu-tRNA(Gln) in organisms which lack either or both of asparaginyl-tRNA or glutaminyl-tRNA synthetases. The reaction takes place in the presence of glutamine and ATP through an activated phospho-Asp-tRNA(Asn) or phospho-Glu-tRNA(Gln). This chain is Aspartyl/glutamyl-tRNA(Asn/Gln) amidotransferase subunit B, found in Cereibacter sphaeroides (strain ATCC 17023 / DSM 158 / JCM 6121 / CCUG 31486 / LMG 2827 / NBRC 12203 / NCIMB 8253 / ATH 2.4.1.) (Rhodobacter sphaeroides).